Reading from the N-terminus, the 211-residue chain is MRTLVVDHPLVAHKLTVLRDKNTPSPVFRQLTEELVTLLAYEATREVKTQPVEIETPVTKTVGTAFTKPTPLVVPILRAGLGMLEGMTKLVPTAEVGFLGMARDEETLDIITYAERLPEDLTGRQIFVLDPMLATGGTLREAIKFLFKRGASDVTCICLLAAPEGLSKLEEELSDANVKIVLASIDEKLNEKSYIVPGLGDAGDRLYGVAG.

Residues Arg-78, Arg-103, and 130–138 (DPMLATGGT) each bind 5-phospho-alpha-D-ribose 1-diphosphate. Uracil contacts are provided by residues Ile-195 and 200–202 (GDA). A 5-phospho-alpha-D-ribose 1-diphosphate-binding site is contributed by Asp-201.

It belongs to the UPRTase family. Mg(2+) is required as a cofactor.

It catalyses the reaction UMP + diphosphate = 5-phospho-alpha-D-ribose 1-diphosphate + uracil. The protein operates within pyrimidine metabolism; UMP biosynthesis via salvage pathway; UMP from uracil: step 1/1. With respect to regulation, allosterically activated by GTP. In terms of biological role, catalyzes the conversion of uracil and 5-phospho-alpha-D-ribose 1-diphosphate (PRPP) to UMP and diphosphate. This chain is Uracil phosphoribosyltransferase, found in Paenarthrobacter aurescens (strain TC1).